The primary structure comprises 158 residues: NAD(P)H-quinone oxidoreductase subunit J, chloroplastic (158 aa).

It belongs to the complex I 30 kDa subunit family. NDH is composed of at least 16 different subunits, 5 of which are encoded in the nucleus.

Its subcellular location is the plastid. It localises to the chloroplast thylakoid membrane. The enzyme catalyses a plastoquinone + NADH + (n+1) H(+)(in) = a plastoquinol + NAD(+) + n H(+)(out). It catalyses the reaction a plastoquinone + NADPH + (n+1) H(+)(in) = a plastoquinol + NADP(+) + n H(+)(out). In terms of biological role, NDH shuttles electrons from NAD(P)H:plastoquinone, via FMN and iron-sulfur (Fe-S) centers, to quinones in the photosynthetic chain and possibly in a chloroplast respiratory chain. The immediate electron acceptor for the enzyme in this species is believed to be plastoquinone. Couples the redox reaction to proton translocation, and thus conserves the redox energy in a proton gradient. The protein is NAD(P)H-quinone oxidoreductase subunit J, chloroplastic of Arabis hirsuta (Hairy rock-cress).